A 357-amino-acid polypeptide reads, in one-letter code: 3-isopropylmalate dehydrogenase (357 aa).

76-89 lines the NAD(+) pocket; sequence GPKWDNEPSHNRPE. Residues Arg96, Arg106, Arg135, and Asp223 each coordinate substrate. Residues Asp223, Asp247, and Asp251 each contribute to the Mg(2+) site. 281–293 serves as a coordination point for NAD(+); it reads GSAPDIAGQDKAN.

Belongs to the isocitrate and isopropylmalate dehydrogenases family. LeuB type 1 subfamily. Homodimer. It depends on Mg(2+) as a cofactor. Requires Mn(2+) as cofactor.

The protein resides in the cytoplasm. The catalysed reaction is (2R,3S)-3-isopropylmalate + NAD(+) = 4-methyl-2-oxopentanoate + CO2 + NADH. It functions in the pathway amino-acid biosynthesis; L-leucine biosynthesis; L-leucine from 3-methyl-2-oxobutanoate: step 3/4. Catalyzes the oxidation of 3-carboxy-2-hydroxy-4-methylpentanoate (3-isopropylmalate) to 3-carboxy-4-methyl-2-oxopentanoate. The product decarboxylates to 4-methyl-2 oxopentanoate. This Helicobacter hepaticus (strain ATCC 51449 / 3B1) protein is 3-isopropylmalate dehydrogenase.